Here is a 176-residue protein sequence, read N- to C-terminus: Ubiquinol-cytochrome c reductase iron-sulfur subunit (176 aa).

The helical transmembrane segment at 15–36 (FLFVATGAAAAVGGAAALWPFI) threads the bilayer. The Rieske domain maps to 87-174 (ARAVNVASLP…YQFVSDTKIQ (88 aa)). C119, H121, C138, and H141 together coordinate [2Fe-2S] cluster. A disulfide bond links C124 and C140.

It belongs to the Rieske iron-sulfur protein family. As to quaternary structure, the main subunits of complex b-c1 are: cytochrome b, cytochrome c1 and the Rieske protein. [2Fe-2S] cluster is required as a cofactor.

Its subcellular location is the cell membrane. It carries out the reaction a quinol + 2 Fe(III)-[cytochrome c](out) = a quinone + 2 Fe(II)-[cytochrome c](out) + 2 H(+)(out). In terms of biological role, component of the ubiquinol-cytochrome c reductase complex (complex III or cytochrome b-c1 complex), which is a respiratory chain that generates an electrochemical potential coupled to ATP synthesis. This is Ubiquinol-cytochrome c reductase iron-sulfur subunit (petA) from Bradyrhizobium diazoefficiens (strain JCM 10833 / BCRC 13528 / IAM 13628 / NBRC 14792 / USDA 110).